The primary structure comprises 452 residues: Ribosomal protein uS12 methylthiotransferase RimO (452 aa).

Residues 3–118 (GKIGFVSLGC…VMQVIHLHLP (116 aa)) form the MTTase N-terminal domain. Residues Cys-12, Cys-48, Cys-77, Cys-149, Cys-153, and Cys-156 each coordinate [4Fe-4S] cluster. The region spanning 135-382 (LTPKHYAYLK…AKAEEISVGR (248 aa)) is the Radical SAM core domain. The TRAM domain maps to 384–452 (AKKIGKRLQV…SQGHDLIAET (69 aa)).

Belongs to the methylthiotransferase family. RimO subfamily. [4Fe-4S] cluster is required as a cofactor.

It localises to the cytoplasm. It catalyses the reaction L-aspartate(89)-[ribosomal protein uS12]-hydrogen + (sulfur carrier)-SH + AH2 + 2 S-adenosyl-L-methionine = 3-methylsulfanyl-L-aspartate(89)-[ribosomal protein uS12]-hydrogen + (sulfur carrier)-H + 5'-deoxyadenosine + L-methionine + A + S-adenosyl-L-homocysteine + 2 H(+). Its function is as follows. Catalyzes the methylthiolation of an aspartic acid residue of ribosomal protein uS12. The chain is Ribosomal protein uS12 methylthiotransferase RimO from Polynucleobacter necessarius subsp. necessarius (strain STIR1).